A 266-amino-acid polypeptide reads, in one-letter code: Energy-coupling factor transporter ATP-binding protein EcfA2 (266 aa).

Positions 3–238 constitute an ABC transporter domain; it reads IEVVNVSHIF…YDPRFFTSKM (236 aa). 43–48 provides a ligand contact to ATP; the sequence is GSGKST. The Proton acceptor role is filled by glutamate 164. The required for heterodimer formation stretch occupies residues 220–266; it reads GTRMEFLEKYDPRFFTSKMLVMRRLVLKGEDPFSMSDDELLERVCNS.

Belongs to the ABC transporter superfamily. Energy-coupling factor EcfA family. In terms of assembly, forms a heterodimer with EcfA1. Forms a stable energy-coupling factor (ECF) transporter complex composed of 2 membrane-embedded substrate-binding proteins (S component, RibU, BioY), 2 ATP-binding proteins (A component) and 2 transmembrane proteins (T component) upon coexpression in E.coli. Stable subcomplexes with both A plus T components can also be isolated. This complex interacts with at least 2 substrate-specific components, BioY and RibU.

The protein resides in the cell inner membrane. ATP-binding (A) component of a common energy-coupling factor (ECF) ABC-transporter complex. Unlike classic ABC transporters this ECF transporter provides the energy necessary to transport a number of different substrates. Expression of the complex plus RibU in E.coli allows riboflavin uptake; uptake does not occur in the absence of RibU or the EcfA1A2T complex. The sequence is that of Energy-coupling factor transporter ATP-binding protein EcfA2 (ecfA2) from Thermotoga maritima (strain ATCC 43589 / DSM 3109 / JCM 10099 / NBRC 100826 / MSB8).